The chain runs to 83 residues: Alpha-conotoxin QcIA (83 aa).

The signal sequence occupies residues 1 to 21; sequence MGMRMMFTLFLLAVLSTTVVS. A propeptide spanning residues 22–48 is cleaved from the precursor; it reads FTLDRASNGRDAAADSKAADQIAQTVR. 2 disulfide bridges follow: cysteine 51–cysteine 57 and cysteine 52–cysteine 65. The ser-Xaa-Pro motif, crucial for potent interaction with nAChR stretch occupies residues 53 to 55; sequence SNP. The propeptide occupies 66–83; the sequence is RRTLMLQNPLNHDMSPSA.

It belongs to the conotoxin A superfamily. In terms of tissue distribution, expressed by the venom duct.

It localises to the secreted. In terms of biological role, alpha-conotoxins bind to the nicotinic acetylcholine receptors (nAChR) and inhibit them. A synthetic amidated version of this toxin potently and preferentially antagonizes neuronal rat alpha-3-beta-2 (IC(50)=55.7 nM) and alpha-6/alpha-3-beta-4 (IC(50)=90.69 nM) nAChRs. The polypeptide is Alpha-conotoxin QcIA (Conus quercinus (Oak cone)).